We begin with the raw amino-acid sequence, 154 residues long: Superoxide dismutase [Cu-Zn] (154 aa).

Histidine 47, histidine 49, and histidine 64 together coordinate Cu cation. Cysteines 58 and 147 form a disulfide. 4 residues coordinate Zn(2+): histidine 64, histidine 72, histidine 81, and aspartate 84. Position 121 (histidine 121) interacts with Cu cation. Residue arginine 144 participates in substrate binding.

This sequence belongs to the Cu-Zn superoxide dismutase family. As to quaternary structure, homodimer. Cu cation serves as cofactor. The cofactor is Zn(2+).

Its subcellular location is the cytoplasm. It carries out the reaction 2 superoxide + 2 H(+) = H2O2 + O2. Functionally, destroys radicals which are normally produced within the cells and which are toxic to biological systems. In Schizosaccharomyces pombe (strain 972 / ATCC 24843) (Fission yeast), this protein is Superoxide dismutase [Cu-Zn] (sod1).